Here is a 291-residue protein sequence, read N- to C-terminus: N-acetylmannosamine kinase (291 aa).

ATP is bound by residues 5–12 and 132–139; these read AIDIGGTK and GVGGGVVS. His156, Cys166, Cys168, and Cys173 together coordinate Zn(2+).

It belongs to the ROK (NagC/XylR) family. NanK subfamily. In terms of assembly, homodimer.

It carries out the reaction an N-acyl-D-mannosamine + ATP = an N-acyl-D-mannosamine 6-phosphate + ADP + H(+). Its pathway is amino-sugar metabolism; N-acetylneuraminate degradation; D-fructose 6-phosphate from N-acetylneuraminate: step 2/5. In terms of biological role, catalyzes the phosphorylation of N-acetylmannosamine (ManNAc) to ManNAc-6-P. This chain is N-acetylmannosamine kinase, found in Escherichia coli O139:H28 (strain E24377A / ETEC).